Here is a 143-residue protein sequence, read N- to C-terminus: Transcriptional regulatory protein RosR (143 aa).

The C2H3-type zinc-finger motif lies at 79–97; sequence CLECGGNFKSLKRHLMTHH.

This sequence belongs to the ros/MucR family.

This chain is Transcriptional regulatory protein RosR (rosR), found in Rhizobium etli (strain ATCC 51251 / DSM 11541 / JCM 21823 / NBRC 15573 / CFN 42).